The primary structure comprises 357 residues: MSISAAGVATGLGANVELKSNVGSSSSSVAGVRLFTSRKAQLRRCAAPATSASLYSDANYDLNNYKFAPIKESIVAREMTRRYMTDMITHADTDVVVVGAGSAGLSCAYELSKNPNVKVAIVEQSVSPGGGAWLGGQLFSAMIVRKPAHRFLDEIEVPYEEMENYVVIKHAALFTSTIMSKLLARPNVKLFNAVAAEDLIIRGDRVSGVVTNWALVAQNHNTQSCMDPNVMEAKVVVSSCGHDGPFGATGVKRLRSIGMIESVPGMKCLDMNAAEDAIVKHTREVVPGMIVTGMEVAEIDGSPRMGPTFGAMMISGQKAAHLALRALGLPNEVDGNYKPNVHPELVLASTDDMTASA.

The transit peptide at 1–51 (MSISAAGVATGLGANVELKSNVGSSSSSVAGVRLFTSRKAQLRRCAAPATS) directs the protein to the chloroplast. Substrate-binding positions include A103, 123 to 124 (EQ), G131, and A196. The residue at position 225 (C225) is a 2,3-didehydroalanine (Cys). Substrate is bound by residues D227, H242, M294, and 304 to 306 (RMG).

Belongs to the THI4 family. As to quaternary structure, homooctamer. Requires Fe cation as cofactor. Post-translationally, during the catalytic reaction, a sulfide is transferred from Cys-225 to a reaction intermediate, generating a dehydroalanine residue.

It localises to the plastid. Its subcellular location is the chloroplast. It catalyses the reaction [ADP-thiazole synthase]-L-cysteine + glycine + NAD(+) = [ADP-thiazole synthase]-dehydroalanine + ADP-5-ethyl-4-methylthiazole-2-carboxylate + nicotinamide + 3 H2O + 2 H(+). In terms of biological role, involved in biosynthesis of the thiamine precursor thiazole. Catalyzes the conversion of NAD and glycine to adenosine diphosphate 5-(2-hydroxyethyl)-4-methylthiazole-2-carboxylic acid (ADT), an adenylated thiazole intermediate. The reaction includes an iron-dependent sulfide transfer from a conserved cysteine residue of the protein to a thiazole intermediate. The enzyme can only undergo a single turnover, which suggests it is a suicide enzyme. May have additional roles in adaptation to various stress conditions and in DNA damage tolerance. The sequence is that of Thiamine thiazole synthase 3, chloroplastic from Physcomitrium patens (Spreading-leaved earth moss).